A 90-amino-acid polypeptide reads, in one-letter code: Probable Fe(2+)-trafficking protein (90 aa).

Belongs to the Fe(2+)-trafficking protein family.

Could be a mediator in iron transactions between iron acquisition and iron-requiring processes, such as synthesis and/or repair of Fe-S clusters in biosynthetic enzymes. This chain is Probable Fe(2+)-trafficking protein, found in Azoarcus sp. (strain BH72).